Consider the following 983-residue polypeptide: Protein translocase subunit SecA (983 aa).

Residues Gln-83, 101-105 (GEGKT), and Asp-489 contribute to the ATP site. Residues 948–983 (ISSEEENNNEKTNININEDLERTKGEAQQTAKNPNE) form a disordered region. The span at 973–983 (EAQQTAKNPNE) shows a compositional bias: polar residues.

The protein belongs to the SecA family. Monomer and homodimer. Part of the essential Sec protein translocation apparatus which comprises SecA, SecYEG and auxiliary proteins SecDF. Other proteins may also be involved.

It localises to the cell membrane. Its subcellular location is the cytoplasm. It carries out the reaction ATP + H2O + cellular proteinSide 1 = ADP + phosphate + cellular proteinSide 2.. Functionally, part of the Sec protein translocase complex. Interacts with the SecYEG preprotein conducting channel. Has a central role in coupling the hydrolysis of ATP to the transfer of proteins into and across the cell membrane, serving as an ATP-driven molecular motor driving the stepwise translocation of polypeptide chains across the membrane. The sequence is that of Protein translocase subunit SecA from Mesomycoplasma hyopneumoniae (strain 7448) (Mycoplasma hyopneumoniae).